A 352-amino-acid polypeptide reads, in one-letter code: Phosphate acyltransferase (352 aa).

This sequence belongs to the PlsX family. Homodimer. Probably interacts with PlsY.

It localises to the cytoplasm. It carries out the reaction a fatty acyl-[ACP] + phosphate = an acyl phosphate + holo-[ACP]. It participates in lipid metabolism; phospholipid metabolism. Its function is as follows. Catalyzes the reversible formation of acyl-phosphate (acyl-PO(4)) from acyl-[acyl-carrier-protein] (acyl-ACP). This enzyme utilizes acyl-ACP as fatty acyl donor, but not acyl-CoA. In Brucella anthropi (strain ATCC 49188 / DSM 6882 / CCUG 24695 / JCM 21032 / LMG 3331 / NBRC 15819 / NCTC 12168 / Alc 37) (Ochrobactrum anthropi), this protein is Phosphate acyltransferase.